We begin with the raw amino-acid sequence, 260 residues long: Imidazole glycerol phosphate synthase subunit HisF (260 aa).

Active-site residues include D11 and D130.

It belongs to the HisA/HisF family. Heterodimer of HisH and HisF.

It is found in the cytoplasm. The catalysed reaction is 5-[(5-phospho-1-deoxy-D-ribulos-1-ylimino)methylamino]-1-(5-phospho-beta-D-ribosyl)imidazole-4-carboxamide + L-glutamine = D-erythro-1-(imidazol-4-yl)glycerol 3-phosphate + 5-amino-1-(5-phospho-beta-D-ribosyl)imidazole-4-carboxamide + L-glutamate + H(+). The protein operates within amino-acid biosynthesis; L-histidine biosynthesis; L-histidine from 5-phospho-alpha-D-ribose 1-diphosphate: step 5/9. In terms of biological role, IGPS catalyzes the conversion of PRFAR and glutamine to IGP, AICAR and glutamate. The HisF subunit catalyzes the cyclization activity that produces IGP and AICAR from PRFAR using the ammonia provided by the HisH subunit. This Desulfatibacillum aliphaticivorans protein is Imidazole glycerol phosphate synthase subunit HisF.